A 145-amino-acid polypeptide reads, in one-letter code: Copper transporter 6 (145 aa).

2 consecutive transmembrane segments (helical) span residues 47–67 (LGMYVLCLIVVFLLAVIVEWL) and 99–119 (YLVMLAVMSFNGGVFIVAIAG).

This sequence belongs to the copper transporter (Ctr) (TC 1.A.56) family. SLC31A subfamily.

The protein resides in the membrane. Functionally, involved in the transport of copper. The polypeptide is Copper transporter 6 (COPT6) (Arabidopsis thaliana (Mouse-ear cress)).